A 222-amino-acid chain; its full sequence is THAP domain-containing protein 6 (222 aa).

The THAP-type zinc-finger motif lies at 1–89 (MVKCCSAIGC…LKPGVIPSIF (89 aa)). Positions 139-142 (EHSY) match the HCFC1-binding motif (HBM) motif. Residues 149-194 (KKLKHKLDHVIGELEDTKESLRNVLDREKRFQKSLRKTIRELKDEC) are a coiled coil.

In Homo sapiens (Human), this protein is THAP domain-containing protein 6 (THAP6).